A 92-amino-acid polypeptide reads, in one-letter code: Small ribosomal subunit protein bS18 (92 aa).

The segment at 1-27 is disordered; that stretch reads MTQQSNSADRKPRGKGPKRPRKPKVDP. A compositionally biased stretch (basic residues) spans 12–22; that stretch reads PRGKGPKRPRK.

It belongs to the bacterial ribosomal protein bS18 family. In terms of assembly, part of the 30S ribosomal subunit. Forms a tight heterodimer with protein bS6.

Its function is as follows. Binds as a heterodimer with protein bS6 to the central domain of the 16S rRNA, where it helps stabilize the platform of the 30S subunit. The protein is Small ribosomal subunit protein bS18 of Deinococcus deserti (strain DSM 17065 / CIP 109153 / LMG 22923 / VCD115).